The following is a 359-amino-acid chain: Protein RecA (359 aa).

64–71 serves as a coordination point for ATP; it reads GHESSGKT. The interval 329 to 359 is disordered; sequence KYSNKDSNDSPKEGSKIKTKVNPAVTQDELI. Basic and acidic residues predominate over residues 331-344; sequence SNKDSNDSPKEGSK.

It belongs to the RecA family.

The protein localises to the cytoplasm. Its function is as follows. Can catalyze the hydrolysis of ATP in the presence of single-stranded DNA, the ATP-dependent uptake of single-stranded DNA by duplex DNA, and the ATP-dependent hybridization of homologous single-stranded DNAs. It interacts with LexA causing its activation and leading to its autocatalytic cleavage. This Francisella tularensis subsp. tularensis (strain FSC 198) protein is Protein RecA.